Here is a 693-residue protein sequence, read N- to C-terminus: Elongation factor G (693 aa).

The tr-type G domain occupies 8 to 282 (KNTRNIGIMA…AAIEYLPSPL (275 aa)). Residues 17–24 (AHIDAGKT), 81–85 (DTPGH), and 135–138 (NKMD) each bind GTP.

This sequence belongs to the TRAFAC class translation factor GTPase superfamily. Classic translation factor GTPase family. EF-G/EF-2 subfamily.

The protein resides in the cytoplasm. In terms of biological role, catalyzes the GTP-dependent ribosomal translocation step during translation elongation. During this step, the ribosome changes from the pre-translocational (PRE) to the post-translocational (POST) state as the newly formed A-site-bound peptidyl-tRNA and P-site-bound deacylated tRNA move to the P and E sites, respectively. Catalyzes the coordinated movement of the two tRNA molecules, the mRNA and conformational changes in the ribosome. The chain is Elongation factor G from Macrococcus caseolyticus (strain JCSC5402) (Macrococcoides caseolyticum).